Reading from the N-terminus, the 468-residue chain is POC1 centriolar protein homolog B (468 aa).

7 WD repeats span residues 16–55, 58–97, 100–139, 142–181, 184–223, 226–265, and 268–307; these read GHKD…RAYK, GHKE…ESTV, AHTA…FLFS, QHTN…CINT, DYKG…LLQH, VHNA…LIYT, and GHQG…YSVK. Residues 420–459 adopt a coiled-coil conformation; sequence NTLEQIVDQLNVLTQTVSILEHRLTLTEDKLKECLENQQK.

This sequence belongs to the WD repeat POC1 family. In terms of assembly, interacts with pat. As to expression, highly expressed in ovary and, at low levels, in testis.

It is found in the cytoplasm. Its subcellular location is the cytoskeleton. The protein resides in the microtubule organizing center. The protein localises to the centrosome. It localises to the centriole. Functionally, plays an important role in centriole assembly and/or stability and ciliogenesis. Involved in early steps of centriole duplication, as well as in the later steps of centriole length control. The protein is POC1 centriolar protein homolog B (poc1b) of Xenopus laevis (African clawed frog).